Consider the following 617-residue polypeptide: Type VII secretion systems protein EssD (617 aa).

Residues 420–448 (QNHVTHGPKDSMVRSEGKHSISSHEMNSS) are disordered. Residues 426–438 (GPKDSMVRSEGKH) are compositionally biased toward basic and acidic residues.

This sequence belongs to the EssD family. In terms of assembly, interacts (via C-terminal) with EssG; this interaction blocks EssD activity. Interacts with EssE.

Its subcellular location is the secreted. The protein localises to the cell membrane. Component of the type VII secretion system (Ess). Plays a role in Ess secretion during infection. Required for the efficient secretion of EsxA. Required for abscess formation and staphylococcal persistence in host tissue. Possesses a toxic DNase activity that is modulated by EssG by forming a nuclease toxin-antitoxin pair. This nuclease toxin targets competitor bacteria. The protein is Type VII secretion systems protein EssD of Staphylococcus aureus (strain Newman).